A 124-amino-acid polypeptide reads, in one-letter code: MNNLLLVALGGSIGAVFRYLISIFMIQVFGSSFPFGTLLVNVLGSFLMGVIYALGQMSHISPEFKALIGVGLLGALTTFSTFSNETLLLMQEGDWLKAALNVVLNLSLCLFMVYLGQQLVFSRI.

The next 4 membrane-spanning stretches (helical) occupy residues 4 to 24, 35 to 55, 60 to 80, and 102 to 122; these read LLLV…ISIF, FGTL…YALG, ISPE…TTFS, and VVLN…LVFS. Na(+) contacts are provided by Gly74 and Thr77.

The protein belongs to the fluoride channel Fluc/FEX (TC 1.A.43) family.

The protein localises to the cell inner membrane. The catalysed reaction is fluoride(in) = fluoride(out). With respect to regulation, na(+) is not transported, but it plays an essential structural role and its presence is essential for fluoride channel function. Functionally, fluoride-specific ion channel. Important for reducing fluoride concentration in the cell, thus reducing its toxicity. The polypeptide is Fluoride-specific ion channel FluC (Shewanella oneidensis (strain ATCC 700550 / JCM 31522 / CIP 106686 / LMG 19005 / NCIMB 14063 / MR-1)).